The sequence spans 249 residues: Vesicle-associated membrane protein-associated protein A (249 aa).

An N-acetylalanine modification is found at A2. Residues A2–P227 lie on the Cytoplasmic side of the membrane. The MSP domain occupies I14–E131. The segment at K50–T53 is phosphorylated FFAT motif binding. N6-acetyllysine is present on K125. Residue S166 is modified to Phosphoserine. The stretch at D169–K205 forms a coiled coil. T170 is modified (phosphothreonine). Residues S214, S216, and S219 each carry the phosphoserine modification. The helical; Anchor for type IV membrane protein transmembrane segment at L228–I248 threads the bilayer.

The protein belongs to the VAMP-associated protein (VAP) (TC 9.B.17) family. As to quaternary structure, homodimer; disulfide-linked. Heterodimer with VAPB. Interacts with VAMP1, VAMP2, STX1A, BET1, SEC22C and with the C-terminal domain of OCLN. Interacts (via MSP domain) with OSBPL1A (via FFAT motif). Interacts (via MSP domain) with ZFYVE27; may retain ZFYVE27 in the endoplasmic reticulum and regulate its function in cell projections formation. Interacts with OSBP. Interacts (via C-terminus) with RSAD2/viperin (via C-terminus). Interacts with IFITM3. Interacts with OSBPL3 (phosphorylated form). Interacts with KIF5A in a ZFYVE27-dependent manner. Interacts (via MSP domain) with STARD3 (via phosphorylated FFAT motif); this interaction recruits VAPA to the endosome. Interacts with STARD3NL (via FFAT motif). Interacts with CERT1. Interacts with PLEKHA3 and SACM1L to form a ternary complex. Interacts with VPS13A (via FFAT motif). Interacts with RB1CC1 (via phosphorylated FFAT motif), MIGA2 (via phosphorylated FFAT motif), RMDN3 (via phosphorylated FFAT motif), KCNB1 (via phosphorylated FFAT motif) and KCNB2 (via phosphorylated FFAT motif). Interacts (via MSP domain) with WDR44 (via FFAT-like motif); the interactions connect the endoplasmic reticulum (ER) with the endosomal tubule.

The protein localises to the endoplasmic reticulum membrane. The protein resides in the cell junction. It is found in the tight junction. Its subcellular location is the cell membrane. Functionally, endoplasmic reticulum (ER)-anchored protein that mediates the formation of contact sites between the ER and endosomes via interaction with FFAT motif-containing proteins such as STARD3 or WDR44. STARD3-VAPA interaction enables cholesterol transfer from the ER to endosomes. Via interaction with WDR44 participates in neosynthesized protein export. In addition, recruited to the plasma membrane through OSBPL3 binding. The OSBPL3-VAPA complex stimulates RRAS signaling which in turn attenuates integrin beta-1 (ITGB1) activation at the cell surface. With OSBPL3, may regulate ER morphology. May play a role in vesicle trafficking. In Bos taurus (Bovine), this protein is Vesicle-associated membrane protein-associated protein A.